The chain runs to 493 residues: 3-octaprenyl-4-hydroxybenzoate carboxy-lyase (493 aa).

Asn-172 contributes to the Mn(2+) binding site. Residues 175–177, 189–191, and 194–195 each bind prenylated FMN; these read IYR, RWL, and RG. Residue Glu-238 participates in Mn(2+) binding. Asp-287 serves as the catalytic Proton donor.

Belongs to the UbiD family. In terms of assembly, homohexamer. The cofactor is prenylated FMN. Requires Mn(2+) as cofactor.

It is found in the cell membrane. It carries out the reaction a 4-hydroxy-3-(all-trans-polyprenyl)benzoate + H(+) = a 2-(all-trans-polyprenyl)phenol + CO2. The protein operates within cofactor biosynthesis; ubiquinone biosynthesis. Functionally, catalyzes the decarboxylation of 3-octaprenyl-4-hydroxy benzoate to 2-octaprenylphenol, an intermediate step in ubiquinone biosynthesis. This is 3-octaprenyl-4-hydroxybenzoate carboxy-lyase from Shewanella denitrificans (strain OS217 / ATCC BAA-1090 / DSM 15013).